The chain runs to 218 residues: Sulfite reductase, assimilatory-type (218 aa).

4 residues coordinate [4Fe-4S] cluster: Cys-91, Cys-97, Cys-131, and Cys-135. Cys-135 is a binding site for siroheme.

Its function is as follows. This enzyme catalyzes the 6-electron reduction of sulfite to sulfide. This is one of several activities required for the biosynthesis of L-cysteine from sulfate. This Nitratidesulfovibrio vulgaris (strain ATCC 29579 / DSM 644 / CCUG 34227 / NCIMB 8303 / VKM B-1760 / Hildenborough) (Desulfovibrio vulgaris) protein is Sulfite reductase, assimilatory-type.